A 148-amino-acid chain; its full sequence is MKLDLKILDARMRDQLPAYATTGSAGLDLRACLDEPLTLKPGETALVPTGLAIHVGDPGYAALILPRSGLGHKHGIVLGNLVGLIDSDYQGQLMISTWNRGETTFVLNPMERLAQLVIVPVVQAEFNIVDDFETSERGAGGFGSTGKH.

Substrate-binding positions include 67–69 (RSG), Asn80, 84–86 (LID), and Met94.

Belongs to the dUTPase family. Requires Mg(2+) as cofactor.

It catalyses the reaction dUTP + H2O = dUMP + diphosphate + H(+). The protein operates within pyrimidine metabolism; dUMP biosynthesis; dUMP from dCTP (dUTP route): step 2/2. Its function is as follows. This enzyme is involved in nucleotide metabolism: it produces dUMP, the immediate precursor of thymidine nucleotides and it decreases the intracellular concentration of dUTP so that uracil cannot be incorporated into DNA. In Paraburkholderia xenovorans (strain LB400), this protein is Deoxyuridine 5'-triphosphate nucleotidohydrolase.